Consider the following 325-residue polypeptide: Thiamine-monophosphate kinase (325 aa).

Residues D27 and D44 each contribute to the Mg(2+) site. Residue H51 coordinates substrate. Residue D73 participates in Mg(2+) binding. ATP-binding positions include Y103, 120 to 121 (GD), and R147. Mg(2+) is bound at residue D121. Mg(2+) is bound at residue D215. Position 217 (S217) interacts with ATP. D218 is a Mg(2+) binding site. Substrate contacts are provided by E264 and Y321.

Belongs to the thiamine-monophosphate kinase family.

It catalyses the reaction thiamine phosphate + ATP = thiamine diphosphate + ADP. Its pathway is cofactor biosynthesis; thiamine diphosphate biosynthesis; thiamine diphosphate from thiamine phosphate: step 1/1. Catalyzes the ATP-dependent phosphorylation of thiamine-monophosphate (TMP) to form thiamine-pyrophosphate (TPP), the active form of vitamin B1. The polypeptide is Thiamine-monophosphate kinase (Bacillus subtilis (strain 168)).